We begin with the raw amino-acid sequence, 151 residues long: Odorant-binding protein (151 aa).

2 cysteine pairs are disulfide-bonded: cysteine 38–cysteine 42 and cysteine 57–cysteine 149.

Belongs to the calycin superfamily. Lipocalin family. Expressed in salivary glands, hair and urine.

The protein localises to the secreted. In terms of biological role, may act as a pheromone. This Phodopus sungorus (Striped hairy-footed hamster) protein is Odorant-binding protein.